The following is a 213-amino-acid chain: 3-dehydroquinate dehydratase (213 aa).

3-dehydroquinate contacts are provided by residues 27–29 and Arg-53; that span reads EVR. Residue His-111 is the Proton donor/acceptor of the active site. Residue Lys-138 is the Schiff-base intermediate with substrate of the active site. Arg-175 and Gln-197 together coordinate 3-dehydroquinate.

It belongs to the type-I 3-dehydroquinase family. Homodimer.

The enzyme catalyses 3-dehydroquinate = 3-dehydroshikimate + H2O. The protein operates within metabolic intermediate biosynthesis; chorismate biosynthesis; chorismate from D-erythrose 4-phosphate and phosphoenolpyruvate: step 3/7. Its function is as follows. Involved in the third step of the chorismate pathway, which leads to the biosynthesis of aromatic amino acids. Catalyzes the cis-dehydration of 3-dehydroquinate (DHQ) and introduces the first double bond of the aromatic ring to yield 3-dehydroshikimate. The chain is 3-dehydroquinate dehydratase from Thermococcus gammatolerans (strain DSM 15229 / JCM 11827 / EJ3).